The sequence spans 395 residues: uncharacterized protein (395 aa).

The disordered stretch occupies residues 115–144 (TKPPTEGGPEKDQSSPSQTQAAPQGPSTAS). Residues 128–141 (SSPSQTQAAPQGPS) are compositionally biased toward low complexity.

This is an uncharacterized protein from Homo sapiens (Human).